The primary structure comprises 226 residues: uncharacterized protein (226 aa).

Residues Ile168 to Gln226 enclose the HTH cro/C1-type domain. A DNA-binding region (H-T-H motif) is located at residues Gln179–Thr198.

This is an uncharacterized protein from Acanthamoeba polyphaga mimivirus (APMV).